A 170-amino-acid polypeptide reads, in one-letter code: Cathelicidin antimicrobial peptide (170 aa).

An N-terminal signal peptide occupies residues 1-30; the sequence is MDTQRDSPSLGRWSLVLLLLGLVMPLAIVA. The propeptide at 31–131 is cathelin-like domain (CLD); it reads QVLSYQEAVL…DISCDKDNRR (101 aa). Intrachain disulfides connect cysteine 86-cysteine 97 and cysteine 108-cysteine 125. The interval 150-162 is active core; that stretch reads FKRIVQRIKDFLQ.

It belongs to the cathelicidin family. In terms of assembly, monomer, homodimer or homotrimer (in vitro). Oligomerizes as tetra- or hexamer in solution (in vitro). Post-translationally, proteolytically cleaved by proteinase PRTN3 into antibacterial peptide LL-37. Proteolytically cleaved by cathepsin CTSG and neutrophil elastase ELANE. Resistant to proteolytic degradation in solution, and when bound to both zwitterionic (mimicking mammalian membranes) and negatively charged membranes (mimicking bacterial membranes). In terms of processing, after secretion onto the skin surface, the CAMP gene product is processed by a serine protease-dependent mechanism into multiple novel antimicrobial peptides distinct from and shorter than cathelicidin LL-37. These peptides show enhanced antimicrobial action, acquiring the ability to kill skin pathogens such as S.aureus, E.coli and C.albicans. These peptides have lost the ability to stimulate CXCL8/IL8 release from keratinocytes. The peptides act synergistically, killing bacteria at lower concentrations when present together, and maintain activity at increased salt condition.

Its subcellular location is the secreted. It is found in the vesicle. Its function is as follows. Antimicrobial protein that is an integral component of the innate immune system. Binds to bacterial lipopolysaccharides (LPS). Acts via neutrophil N-formyl peptide receptors to enhance the release of CXCL2. Postsecretory processing generates multiple cathelicidin antimicrobial peptides with various lengths which act as a topical antimicrobial defense in sweat on skin. The unprocessed precursor form, cathelicidin antimicrobial peptide, inhibits the growth of Gram-negative E.coli and E.aerogenes with efficiencies comparable to that of the mature peptide LL-37 (in vitro). Functionally, antimicrobial peptide that is an integral component of the innate immune system. Binds to bacterial lipopolysaccharides (LPS). Causes membrane permeabilization by forming transmembrane pores (in vitro). Causes lysis of E.coli. Exhibits antimicrobial activity against Gram-negative bacteria such as P.aeruginosa, S.typhimurium, E.aerogenes, E.coli and P.syringae, Gram-positive bacteria such as L.monocytogenes, S.epidermidis, S.pyogenes and S.aureus, as well as vancomycin-resistant enterococci (in vitro). Exhibits antimicrobial activity against methicillin-resistant S.aureus, P.mirabilis, and C.albicans in low-salt media, but not in media containing 100 mM NaCl (in vitro). Forms chiral supramolecular assemblies with quinolone signal (PQS) molecules of P.aeruginosa, which may lead to interference of bacterial quorum signaling and perturbance of bacterial biofilm formation. May form supramolecular fiber-like assemblies on bacterial membranes. Induces cytokine and chemokine producation as well as TNF/TNFA and CSF2/GMCSF production in normal human keratinocytes. Exhibits hemolytic activity against red blood cells. Exhibits antimicrobial activity against E.coli and B.megaterium (in vitro). This chain is Cathelicidin antimicrobial peptide, found in Nomascus leucogenys (Northern white-cheeked gibbon).